The primary structure comprises 275 residues: Membrane protein insertase YidC 2 (275 aa).

An N-terminal signal peptide occupies residues 1-21; the sequence is MKKKNIILISVLLGALLLLTG. The N-palmitoyl cysteine moiety is linked to residue C22. A lipid anchor (S-diacylglycerol cysteine) is attached at C22. The next 4 membrane-spanning stretches (helical) occupy residues 48–68, 133–153, 174–194, and 212–232; these read FVAK…TLLI, QMGC…YYAI, MVLA…SMIG, and IMIL…WAVG.

The protein belongs to the OXA1/ALB3/YidC family. Type 2 subfamily.

It is found in the cell membrane. Required for the insertion and/or proper folding and/or complex formation of integral membrane proteins into the membrane. Involved in integration of membrane proteins that insert both dependently and independently of the Sec translocase complex, as well as at least some lipoproteins. The protein is Membrane protein insertase YidC 2 of Listeria monocytogenes serotype 4b (strain F2365).